A 659-amino-acid polypeptide reads, in one-letter code: Biosynthetic arginine decarboxylase (659 aa).

Lys128 is modified (N6-(pyridoxal phosphate)lysine). 308-318 lines the substrate pocket; it reads FDVGGGLGVDY.

It belongs to the Orn/Lys/Arg decarboxylase class-II family. SpeA subfamily. Mg(2+) is required as a cofactor. The cofactor is pyridoxal 5'-phosphate.

The catalysed reaction is L-arginine + H(+) = agmatine + CO2. Its pathway is amine and polyamine biosynthesis; agmatine biosynthesis; agmatine from L-arginine: step 1/1. Catalyzes the biosynthesis of agmatine from arginine. In Yersinia pestis, this protein is Biosynthetic arginine decarboxylase.